The following is a 339-amino-acid chain: DNA-directed RNA polymerase subunit alpha (339 aa).

The segment at 1 to 235 (MVREEVAVST…DLFIPFLHGE (235 aa)) is alpha N-terminal domain (alpha-NTD). Positions 267–339 (KAIALECIFI…FTIDLPKNKF (73 aa)) are alpha C-terminal domain (alpha-CTD).

This sequence belongs to the RNA polymerase alpha chain family. As to quaternary structure, in plastids the minimal PEP RNA polymerase catalytic core is composed of four subunits: alpha, beta, beta', and beta''. When a (nuclear-encoded) sigma factor is associated with the core the holoenzyme is formed, which can initiate transcription.

The protein resides in the plastid. The protein localises to the chloroplast. The catalysed reaction is RNA(n) + a ribonucleoside 5'-triphosphate = RNA(n+1) + diphosphate. DNA-dependent RNA polymerase catalyzes the transcription of DNA into RNA using the four ribonucleoside triphosphates as substrates. This is DNA-directed RNA polymerase subunit alpha from Drimys granadensis.